An 806-amino-acid chain; its full sequence is Volume-regulated anion channel subunit LRRC8E (806 aa).

The Cytoplasmic portion of the chain corresponds to 1-22 (MIPVAEFKQFTEQQPAFKVLKP). The chain crosses the membrane as a helical span at residues 23 to 43 (WWDVLAEYITYAMLMIGVFGC). Residues 44–130 (TLQVTQDKII…YETALHWYAK (87 aa)) lie on the Extracellular side of the membrane. A disulfide bridge links Cys54 with Cys311. N-linked (GlcNAc...) asparagine glycans are attached at residues Asn57 and Asn80. Over residues 72 to 81 (YDQQSPPSND) the composition is skewed to polar residues. The interval 72-103 (YDQQSPPSNDSDLETTIPPPTATSSPPREMSG) is disordered. Residues 131 to 151 (YFPYLVVIHTLIFIICGNFWF) traverse the membrane as a helical segment. Topologically, residues 152 to 275 (KFPGTSSKIE…MRQTVLKVCK (124 aa)) are cytoplasmic. Residues 182 to 213 (EVSGESSQEKPSQERSIDRELSKPNFEEGSPA) form a disordered region. Over residues 188-207 (SQEKPSQERSIDRELSKPNF) the composition is skewed to basic and acidic residues. The chain crosses the membrane as a helical span at residues 276–296 (FVLITIYNAVLVGKIHFIVPC). Residues 297–323 (SVHTEDMTGYNSFCCNHTKAHLFSKLA) are Extracellular-facing. A glycan (N-linked (GlcNAc...) asparagine) is linked at Asn312. A helical membrane pass occupies residues 324 to 344 (ITYLCFLGVYGLTCLYTLYWL). Residues 345–806 (FRRPLKEYSF…VEVRDKLKED (462 aa)) lie on the Cytoplasmic side of the membrane. LRR repeat units follow at residues 544–566 (LKSL…VADV), 569–589 (HLQK…NALK), 593–614 (LVKE…VFSL), 616–637 (NLQV…ISLQ), 641–662 (KLSV…IRKL), 664–685 (GLEE…LFLC), 687–708 (KLRH…IGVL), 710–731 (LLQY…LFFC), 733–754 (KLKT…VGSL), and 756–777 (CLVK…LGNC).

The protein belongs to the LRRC8 family. In terms of assembly, heterohexamer; oligomerizes with other LRRC8 proteins (lrrc8a, lrrc8c, lrrc8d and/or lrrc8b) to form a heterohexamer. Detected in a channel complex that contains lrrc8a, lrrc8c and lrrc8e. In vivo, the subunit composition may depend primarily on expression levels, and heterooligomeric channels containing various proportions of the different LRRC8 proteins may coexist.

Its subcellular location is the cell membrane. It localises to the endoplasmic reticulum membrane. The protein localises to the lysosome membrane. It catalyses the reaction chloride(in) = chloride(out). It carries out the reaction iodide(out) = iodide(in). The enzyme catalyses taurine(out) = taurine(in). The catalysed reaction is 2',3'-cGAMP(out) = 2',3'-cGAMP(in). Non-essential component of the volume-regulated anion channel (VRAC, also named VSOAC channel), an anion channel required to maintain a constant cell volume in response to extracellular or intracellular osmotic changes. The VRAC channel conducts iodide better than chloride and can also conduct organic osmolytes like taurine. Mediates efflux of amino acids, such as aspartate, in response to osmotic stress. The VRAC channel also mediates transport of immunoreactive cyclic dinucleotide GMP-AMP (2'-3'-cGAMP), an immune messenger produced in response to DNA virus in the cytosol. Channel activity requires lrrc8a plus at least one other family member (lrrc8b, lrrc8c, lrrc8d or lrrc8e); channel characteristics depend on the precise subunit composition. Also plays a role in lysosome homeostasis by forming functional lysosomal VRAC channels in response to low cytoplasmic ionic strength condition: lysosomal VRAC channels are necessary for the formation of large lysosome-derived vacuoles, which store and then expel excess water to maintain cytosolic water homeostasis. The sequence is that of Volume-regulated anion channel subunit LRRC8E from Xenopus tropicalis (Western clawed frog).